We begin with the raw amino-acid sequence, 600 residues long: Methionine--tRNA ligase (600 aa).

The 'HIGH' region motif lies at 11–21 (PYANGPRHIGH). Positions 143, 146, 156, and 159 each coordinate Zn(2+). Residues 350–354 (QFSSS) carry the 'KMSKS' region motif. Serine 353 provides a ligand contact to ATP.

It belongs to the class-I aminoacyl-tRNA synthetase family. MetG type 1 subfamily. In terms of assembly, monomer. Requires Zn(2+) as cofactor.

It localises to the cytoplasm. The enzyme catalyses tRNA(Met) + L-methionine + ATP = L-methionyl-tRNA(Met) + AMP + diphosphate. Its function is as follows. Is required not only for elongation of protein synthesis but also for the initiation of all mRNA translation through initiator tRNA(fMet) aminoacylation. In Kineococcus radiotolerans (strain ATCC BAA-149 / DSM 14245 / SRS30216), this protein is Methionine--tRNA ligase.